We begin with the raw amino-acid sequence, 804 residues long: Endoplasmin (804 aa).

The N-terminal stretch at 1–21 (MRALWVLGLCCVLLTFGSVRA) is a signal peptide. Positions 42-44 (SRT) match the SRT pseudosubstrate motif motif. The N-linked (GlcNAc...) asparagine glycan is linked to Asn-62. Residue Ser-64 is modified to Phosphoserine. Asn-107 carries an N-linked (GlcNAc...) asparagine glycan. ATP is bound by residues Asn-107, Asp-149, and Asn-162. Lys-168 bears the N6-(2-hydroxyisobutyryl)lysine mark. Ser-172 is subject to Phosphoserine. An ATP-binding site is contributed by Phe-199. The N-linked (GlcNAc...) asparagine glycan is linked to Asn-217. A Phosphothreonine; by CK2 modification is found at Thr-288. Positions 288–323 (TVEEPMEEEEAAKEEKEDSDDEAAVEEEEEEKKPKT) are disordered. Acidic residues predominate over residues 289–317 (VEEPMEEEEAAKEEKEDSDDEAAVEEEEE). The residue at position 306 (Ser-306) is a Phosphoserine; by CK2. Ser-403 carries the post-translational modification Phosphoserine. At Lys-404 the chain carries N6-succinyllysine. N-linked (GlcNAc...) asparagine glycosylation is present at Asn-445. At Ser-447 the chain carries Phosphoserine. Position 479 is an N6-acetyllysine (Lys-479). N-linked (GlcNAc...) asparagine glycans are attached at residues Asn-481 and Asn-502. Lys-633 is modified (N6-succinyllysine). The interval 750 to 804 (DPDAKVEEEPEEEPEETTEDTTEDTEQDDEEEMDAGTDDEEQETVKKSTAEKDEL) is disordered. The span at 757–791 (EEPEEEPEETTEDTTEDTEQDDEEEMDAGTDDEEQ) shows a compositional bias: acidic residues. 4 positions are modified to phosphothreonine; by CK2: Thr-766, Thr-770, Thr-774, and Thr-786. Basic and acidic residues predominate over residues 792–804 (ETVKKSTAEKDEL). Residues 801–804 (KDEL) carry the Prevents secretion from ER motif.

This sequence belongs to the heat shock protein 90 family. In terms of assembly, homodimer; disulfide-linked. Component of an EIF2 complex at least composed of CELF1/CUGBP1, CALR, CALR3, EIF2S1, EIF2S2, HSP90B1 and HSPA5. Part of a large chaperone multiprotein complex comprising DNAJB11, HSP90B1, HSPA5, HYOU, PDIA2, PDIA4, PDIA6, PPIB, SDF2L1, UGGT1 and very small amounts of ERP29, but not, or at very low levels, CALR nor CANX. Interacts with AIMP1; regulates its retention in the endoplasmic reticulum. Hyperglycosylated form interacts with OS9; promoting its degradation by the endoplasmic reticulum associated degradation (ERAD). Interacts with CNPY3. This interaction is disrupted in the presence of ATP. Interacts with TLR4 and TLR9, but not with TLR3. Interacts with MZB1 in a calcium-dependent manner. Interacts with METTL23. Interacts with IL1B; the interaction facilitates cargo translocation into the ERGIC. Interacts with EIF2AK3. Phosphorylated by CK2. Post-translationally, N-glycosylated cotranslationally at Asn-217 by STT3A-containing OST-A complex: this glycosylation is constitutive. In response to various stress, 5 additional facultative sites (Asn-62, Asn-107, Asn-445, Asn-481 and Asn-502) can be glycosylated post-translationally by STT3B-containing OST-B complex, leading to a hyperglycosylated form that is degraded by the ER-associated degradation (ERAD) pathway. In normal conditions, the OST-A complex together with CCDC134 prevent glycosylation at facultative sites during protein folding, thereby preventing hyperglycosylation. Mechanistically, nascent HSP90B1 is tethered during translation to a specialized CCDC134-containing translocon that forms a microenvironment for its folding, in which STT3A associates with the SRT pseudosubstrate motif, and prevents access to facultative glycosylation sites until folding is completed, rendering its facultative sites inaccessible to the OST-B complex. Detected in heart muscle (at protein level).

It is found in the endoplasmic reticulum lumen. The protein resides in the sarcoplasmic reticulum lumen. The protein localises to the melanosome. It carries out the reaction ATP + H2O = ADP + phosphate + H(+). ATP-dependent chaperone involved in the processing of proteins in the endoplasmic reticulum, regulating their transport. Together with MESD, acts as a modulator of the Wnt pathway by promoting the folding of LRP6, a coreceptor of the canonical Wnt pathway. When associated with CNPY3, required for proper folding of Toll-like receptors. Promotes folding and trafficking of TLR4 to the cell surface. May participate in the unfolding of cytosolic leaderless cargos (lacking the secretion signal sequence) such as the interleukin 1/IL-1 to facilitate their translocation into the ERGIC (endoplasmic reticulum-Golgi intermediate compartment) and secretion; the translocation process is mediated by the cargo receptor TMED10. May also function in endoplasmic reticulum associated degradation (ERAD); it is however unclear whether it participates to ERAD or is a target of ERAD. In Canis lupus familiaris (Dog), this protein is Endoplasmin (HSP90B1).